A 1465-amino-acid chain; its full sequence is DNA polymerase III PolC-type (1465 aa).

Residues 427–583 enclose the Exonuclease domain; it reads YVVFDVETTG…YDAEATGRLL (157 aa).

This sequence belongs to the DNA polymerase type-C family. PolC subfamily.

The protein resides in the cytoplasm. It catalyses the reaction DNA(n) + a 2'-deoxyribonucleoside 5'-triphosphate = DNA(n+1) + diphosphate. Required for replicative DNA synthesis. This DNA polymerase also exhibits 3' to 5' exonuclease activity. The polypeptide is DNA polymerase III PolC-type (Streptococcus pyogenes serotype M12 (strain MGAS2096)).